The primary structure comprises 255 residues: MQIDVLSLFPNMFEPLRESMIGKAIERELLNFDVVDYRSYSHDKHHHVDDTPYGGGAGMLLKPEPLFEAMDGVNERHPGPKRVILMDPAGKKFNHQAARALSQEDHLVFICGHYEGYDERIRTLVTDEYSLGDYVLTGGELPAMVMIDAIVRLLPGVLGNDESAHTDSFENGLLEYPQYTRPPEYRGMKVPEVLQNGNHQLIARWRQKESLRRTYLRRPDLLKTITLDQTAQKLLREVKTEEATKAAEARLKNQS.

S-adenosyl-L-methionine-binding positions include Gly-112 and 131–136; that span reads LGDYVL.

Belongs to the RNA methyltransferase TrmD family. Homodimer.

The protein resides in the cytoplasm. The catalysed reaction is guanosine(37) in tRNA + S-adenosyl-L-methionine = N(1)-methylguanosine(37) in tRNA + S-adenosyl-L-homocysteine + H(+). Its function is as follows. Specifically methylates guanosine-37 in various tRNAs. In Lacticaseibacillus paracasei (strain ATCC 334 / BCRC 17002 / CCUG 31169 / CIP 107868 / KCTC 3260 / NRRL B-441) (Lactobacillus paracasei), this protein is tRNA (guanine-N(1)-)-methyltransferase.